Reading from the N-terminus, the 544-residue chain is CTP synthase (544 aa).

The tract at residues M1–L266 is amidoligase domain. A CTP-binding site is contributed by S13. S13 contributes to the UTP binding site. S14–I19 provides a ligand contact to ATP. L-glutamine is bound at residue Y54. D71 is a binding site for ATP. Residues D71 and E140 each coordinate Mg(2+). CTP is bound by residues D147 to E149, K187 to Q192, and K223. Residues K187–Q192 and K223 contribute to the UTP site. Positions K292–L543 constitute a Glutamine amidotransferase type-1 domain. Residue G354 coordinates L-glutamine. C381 (nucleophile; for glutamine hydrolysis) is an active-site residue. Residues F382–Q385, E405, and R471 contribute to the L-glutamine site. Catalysis depends on residues H516 and E518.

The protein belongs to the CTP synthase family. In terms of assembly, homotetramer.

It catalyses the reaction UTP + L-glutamine + ATP + H2O = CTP + L-glutamate + ADP + phosphate + 2 H(+). The catalysed reaction is L-glutamine + H2O = L-glutamate + NH4(+). The enzyme catalyses UTP + NH4(+) + ATP = CTP + ADP + phosphate + 2 H(+). The protein operates within pyrimidine metabolism; CTP biosynthesis via de novo pathway; CTP from UDP: step 2/2. With respect to regulation, allosterically activated by GTP, when glutamine is the substrate; GTP has no effect on the reaction when ammonia is the substrate. The allosteric effector GTP functions by stabilizing the protein conformation that binds the tetrahedral intermediate(s) formed during glutamine hydrolysis. Inhibited by the product CTP, via allosteric rather than competitive inhibition. Its function is as follows. Catalyzes the ATP-dependent amination of UTP to CTP with either L-glutamine or ammonia as the source of nitrogen. Regulates intracellular CTP levels through interactions with the four ribonucleotide triphosphates. In Granulibacter bethesdensis (strain ATCC BAA-1260 / CGDNIH1), this protein is CTP synthase.